A 300-amino-acid chain; its full sequence is tRNA dimethylallyltransferase (300 aa).

Position 18 to 25 (18 to 25 (GPTATGKS)) interacts with ATP. A substrate-binding site is contributed by 20-25 (TATGKS). The interval 43-46 (DSRQ) is interaction with substrate tRNA.

It belongs to the IPP transferase family. Monomer. Mg(2+) serves as cofactor.

The enzyme catalyses adenosine(37) in tRNA + dimethylallyl diphosphate = N(6)-dimethylallyladenosine(37) in tRNA + diphosphate. Its function is as follows. Catalyzes the transfer of a dimethylallyl group onto the adenine at position 37 in tRNAs that read codons beginning with uridine, leading to the formation of N6-(dimethylallyl)adenosine (i(6)A). In Cyanothece sp. (strain PCC 7425 / ATCC 29141), this protein is tRNA dimethylallyltransferase.